We begin with the raw amino-acid sequence, 427 residues long: Forkhead box protein A1-B (427 aa).

Positions 157–251 (KPPYSYISLI…ENGCYLRRQK (95 aa)) form a DNA-binding region, fork-head. Basic and acidic residues predominate over residues 256-272 (EKTQGGKGNQDGRKDHS). A disordered region spans residues 256–336 (EKTQGGKGNQ…HQNHSTHSLA (81 aa)). Low complexity predominate over residues 285–302 (SSQMDSSSSMSNPSSSPQ). Over residues 323–334 (PLSSHQNHSTHS) the composition is skewed to polar residues.

Present in the vegetal pole and marginal zone but not the animal pole of gastrulae and in equal levels in the dorsal and ventral halves of both gastrulae and neurulae. At neurula stage, expressed in the notochord. During tailbud stages, expressed in the foregut, brain, hypocord, neural floor plate and in two lines of cells just dorsal and ventral to the notochord. Expressed in the adult liver.

The protein localises to the nucleus. Functionally, probable transcription factor. The polypeptide is Forkhead box protein A1-B (foxa1-b) (Xenopus laevis (African clawed frog)).